We begin with the raw amino-acid sequence, 446 residues long: Histone acetyltransferase type B subunit 2 (446 aa).

WD repeat units lie at residues 138-178 (DHPG…ITPS), 189-229 (GHKE…GTSK), 231-270 (LKYS…QIID), 286-326 (GHSD…SKVH), and 330-370 (GHQD…DEQT). Residues 372-376 (DDAED) are interaction with the histone H4 N-terminus. Residues 387 to 427 (GHTNHLADFSWNRNDPWLVCSAAEDNLLQIWKVANSIVSKE) form a WD 6 repeat. The disordered stretch occupies residues 427–446 (EPADMSTPELDDPKPKQSSH). Over residues 437–446 (DDPKPKQSSH) the composition is skewed to basic and acidic residues.

This sequence belongs to the WD repeat RBAP46/RBAP48/MSI1 family. Component of the HAT-B complex composed of at least hat-1 and hat-2. The HAT-B complex binds to histone H4 tail.

It is found in the cytoplasm. Its subcellular location is the nucleus. Its function is as follows. Regulatory subunit of the histone acetylase B (HAT-B) complex. The complex acetylates 'Lys-12' of histone H4 which is required for telomeric silencing. This Neurospora crassa (strain ATCC 24698 / 74-OR23-1A / CBS 708.71 / DSM 1257 / FGSC 987) protein is Histone acetyltransferase type B subunit 2 (hat-2).